A 101-amino-acid chain; its full sequence is Small ribosomal subunit protein uS14 (101 aa).

The protein belongs to the universal ribosomal protein uS14 family. Part of the 30S ribosomal subunit. Contacts proteins S3 and S10.

Its function is as follows. Binds 16S rRNA, required for the assembly of 30S particles and may also be responsible for determining the conformation of the 16S rRNA at the A site. In Xylella fastidiosa (strain 9a5c), this protein is Small ribosomal subunit protein uS14.